Here is a 376-residue protein sequence, read N- to C-terminus: Endoplasmic reticulum-Golgi intermediate compartment protein 2 (376 aa).

At 1–33 (MRRLNKKKALNFVRELDAFPKVPESYVETTASG) the chain is on the cytoplasmic side. A helical transmembrane segment spans residues 34-54 (GTVSLLAFTAMALLAFFEFFV). The Lumenal segment spans residues 55–318 (YRDTWMKYEY…PFWQFLVRLC (264 aa)). Residues 319 to 339 (GIIGGIFSTTGMLHNLVGFCV) form a helical membrane-spanning segment. The Cytoplasmic portion of the chain corresponds to 340–376 (DVVCCRFKLGVYKPKSMSDFDGQINSLTPLLSENAEQ).

It belongs to the ERGIC family.

Its subcellular location is the endoplasmic reticulum-Golgi intermediate compartment membrane. It localises to the golgi apparatus. The protein localises to the cis-Golgi network membrane. It is found in the endoplasmic reticulum membrane. Functionally, possible role in transport between endoplasmic reticulum and Golgi. The protein is Endoplasmic reticulum-Golgi intermediate compartment protein 2 (ergic2) of Danio rerio (Zebrafish).